Reading from the N-terminus, the 462-residue chain is NAD-capped RNA hydrolase NUDT12 (462 aa).

ANK repeat units follow at residues 11 to 40 (EIVT…SLLN), 45 to 74 (NGWT…DRSI), and 78 to 98 (SRQT…ANLL). Lys-185 is modified (N6-succinyllysine). Residues Cys-284 and Cys-287 each coordinate Zn(2+). Lys-292 is subject to N6-succinyllysine. Zn(2+)-binding residues include Cys-302 and Cys-307. Substrate is bound by residues Tyr-318, 354–356 (AGF), Glu-370, Glu-374, and Glu-415. A Nudix hydrolase domain is found at 319 to 453 (PRVDPVVIMQ…SRAIAHQLIK (135 aa)). Positions 354, 370, 374, and 415 each coordinate Mg(2+). The Nudix box motif lies at 355–376 (GFIEPGETIEDAVRREVEEESG). Residues 460 to 462 (PNL) carry the Microbody targeting signal motif.

The protein belongs to the Nudix hydrolase family. NudC subfamily. In terms of assembly, homodimer. Homodimerization is essential for its catalytic activity and protein stability. Interacts (via ANK repeats) with BLMH. Mg(2+) serves as cofactor. The cofactor is Zn(2+).

It is found in the cytoplasm. The protein resides in the peroxisome. Its subcellular location is the cytoplasmic granule. It catalyses the reaction a 5'-end NAD(+)-phospho-ribonucleoside in mRNA + H2O = a 5'-end phospho-adenosine-phospho-ribonucleoside in mRNA + beta-nicotinamide D-ribonucleotide + 2 H(+). The catalysed reaction is NAD(+) + H2O = beta-nicotinamide D-ribonucleotide + AMP + 2 H(+). It carries out the reaction NADH + H2O = reduced beta-nicotinamide D-ribonucleotide + AMP + 2 H(+). The enzyme catalyses NADPH + H2O = reduced beta-nicotinamide D-ribonucleotide + adenosine 2',5'-bisphosphate + 2 H(+). Its function is as follows. mRNA decapping enzyme that specifically removes the nicotinamide adenine dinucleotide (NAD) cap from a subset of mRNAs by hydrolyzing the diphosphate linkage to produce nicotinamide mononucleotide (NMN) and 5' monophosphate mRNA. The NAD-cap is present at the 5'-end of some RNAs; in contrast to the canonical N7 methylguanosine (m7G) cap, the NAD cap promotes mRNA decay. Preferentially acts on NAD-capped transcripts in response to nutrient stress. Also acts on free nicotinamide adenine dinucleotide molecules: hydrolyzes NAD(H) into NMN(H) and AMP, and NADPH into NMNH and 2',5'-ADP. May act to regulate the concentration of peroxisomal nicotinamide nucleotide cofactors required for oxidative metabolism in this organelle. Regulates the levels of circadian clock components PER1, PER2, PER3 and CRY2 in the liver. This chain is NAD-capped RNA hydrolase NUDT12, found in Macaca fascicularis (Crab-eating macaque).